Reading from the N-terminus, the 106-residue chain is Urease subunit beta (106 aa).

The protein belongs to the urease beta subunit family. In terms of assembly, heterotrimer of UreA (gamma), UreB (beta) and UreC (alpha) subunits. Three heterotrimers associate to form the active enzyme.

It localises to the cytoplasm. The enzyme catalyses urea + 2 H2O + H(+) = hydrogencarbonate + 2 NH4(+). It participates in nitrogen metabolism; urea degradation; CO(2) and NH(3) from urea (urease route): step 1/1. The sequence is that of Urease subunit beta from Synechococcus sp. (strain CC9902).